The following is a 357-amino-acid chain: sn-glycerol-3-phosphate import ATP-binding protein UgpC (357 aa).

An ABC transporter domain is found at 4–235 (LKLQAVTKSY…PASLFVASFI (232 aa)). Residue 37 to 44 (GPSGCGKS) coordinates ATP.

It belongs to the ABC transporter superfamily. sn-glycerol-3-phosphate importer (TC 3.A.1.1.3) family. As to quaternary structure, the complex is composed of two ATP-binding proteins (UgpC), two transmembrane proteins (UgpA and UgpE) and a solute-binding protein (UgpB).

Its subcellular location is the cell inner membrane. The catalysed reaction is sn-glycerol 3-phosphate(out) + ATP + H2O = sn-glycerol 3-phosphate(in) + ADP + phosphate + H(+). Functionally, part of the ABC transporter complex UgpBAEC involved in sn-glycerol-3-phosphate (G3P) import. Responsible for energy coupling to the transport system. In Yersinia pestis bv. Antiqua (strain Antiqua), this protein is sn-glycerol-3-phosphate import ATP-binding protein UgpC.